The primary structure comprises 508 residues: MSSQCPFSHLAATNLTMGNGAPVADNQNSLTAGPRGPLLAQDLWLNEKLADFVREVIPERRMHAKGSGAFGTFTVTHDITKYTRAKIFSEVGKKTEMFARFTTVAGERGAADAERDIRGFALKFYTEEGNWDLVGNNTPVFFLRDPRKFPDLNKAVKRDPRTNMRSATNNWDFWTLLPEALHQVTVVMSDRGIPASYRHMHGFGSHTYSFWNEAGERFWVKFHFRTQQGIKNLTDAEAAEIIANDRESHQRDLYEAIERGDFPKWTLFVQIMPEADAEKVPYHPFDLTKVWSKKDYPLIEVGEFELNRNPENFFADVEQSAFAPSNLVPGIGASPDRMLQARLFNYADAQRYRLGVNYRQIPVNRPRCPVHSNQRDGQGRVDGNYGSLPHYEPNSFSQWQQQPDFAEPPLRINGDAAHWDYRNDDNDYFSQPRALFNLMNAEQKQSLFNNTAAAMGDAPDFIKYRHIRNCHWCDAAYGEGVAKALGLTVEDALKARDTDPALGQGGLL.

Active-site residues include His63 and Asn136. Tyr346 lines the heme pocket.

This sequence belongs to the catalase family. Homohexamer. It depends on heme as a cofactor.

Its subcellular location is the cytoplasm. It carries out the reaction 2 H2O2 = O2 + 2 H2O. Its function is as follows. Decomposes hydrogen peroxide into water and oxygen; serves to protect cells from the toxic effects of hydrogen peroxide. This Haemophilus influenzae (strain ATCC 51907 / DSM 11121 / KW20 / Rd) protein is Catalase (katA).